A 426-amino-acid chain; its full sequence is Serine--tRNA ligase (426 aa).

Residue T233 to E235 coordinates L-serine. ATP is bound at residue R264 to E266. E287 lines the L-serine pocket. E351 to S354 is an ATP binding site. S387 serves as a coordination point for L-serine.

Belongs to the class-II aminoacyl-tRNA synthetase family. Type-1 seryl-tRNA synthetase subfamily. As to quaternary structure, homodimer. The tRNA molecule binds across the dimer.

The protein resides in the cytoplasm. The catalysed reaction is tRNA(Ser) + L-serine + ATP = L-seryl-tRNA(Ser) + AMP + diphosphate + H(+). The enzyme catalyses tRNA(Sec) + L-serine + ATP = L-seryl-tRNA(Sec) + AMP + diphosphate + H(+). Its pathway is aminoacyl-tRNA biosynthesis; selenocysteinyl-tRNA(Sec) biosynthesis; L-seryl-tRNA(Sec) from L-serine and tRNA(Sec): step 1/1. Functionally, catalyzes the attachment of serine to tRNA(Ser). Is also able to aminoacylate tRNA(Sec) with serine, to form the misacylated tRNA L-seryl-tRNA(Sec), which will be further converted into selenocysteinyl-tRNA(Sec). The protein is Serine--tRNA ligase of Azotobacter vinelandii (strain DJ / ATCC BAA-1303).